Reading from the N-terminus, the 480-residue chain is Glutamate--tRNA ligase (480 aa).

A 'HIGH' region motif is present at residues 21–31; that stretch reads PSPTGYLHVGG. Zn(2+)-binding residues include Cys110, Cys112, Cys137, and His139. The short motif at 248 to 252 is the 'KMSKS' region element; it reads KLSKR. Residue Lys251 participates in ATP binding.

The protein belongs to the class-I aminoacyl-tRNA synthetase family. Glutamate--tRNA ligase type 1 subfamily. Monomer. The cofactor is Zn(2+).

It localises to the cytoplasm. The catalysed reaction is tRNA(Glu) + L-glutamate + ATP = L-glutamyl-tRNA(Glu) + AMP + diphosphate. Its function is as follows. Catalyzes the attachment of glutamate to tRNA(Glu) in a two-step reaction: glutamate is first activated by ATP to form Glu-AMP and then transferred to the acceptor end of tRNA(Glu). The chain is Glutamate--tRNA ligase from Haemophilus influenzae (strain ATCC 51907 / DSM 11121 / KW20 / Rd).